A 650-amino-acid polypeptide reads, in one-letter code: Putative F-box protein R757 (650 aa).

An F-box domain is found at 7–53 (FSVMESLPTELAYHVLSFIDFNSVVTYRLCSQESNNFIKSMLVFFPI).

This Acanthamoeba polyphaga mimivirus (APMV) protein is Putative F-box protein R757.